The primary structure comprises 438 residues: Putative permease HI_0125 (438 aa).

Transmembrane regions (helical) follow at residues 21-41 (IIAGLTTFLAMVYSVIVVPNM), 51-71 (SVFIATCLVAGLGSILIGLWA), 73-93 (APMAIGCAISLTAFTAFSLVI), 97-117 (VAIPVALGAVFLMGVVFTLIS), 137-157 (AGIGIGLFLLLIAANGVGLVV), 167-187 (LGDFTSFPVMMSLIGLALIIG), 195-215 (GGILWVIIAITIVGLIFDPNV), 238-258 (FMGALQPAILPVVFALVMTAV), 296-316 (LFSGLFGTAPAAVYIESAAGT), 326-346 (AIVVGVLFLLMLFFQPLAFLV), 347-367 (PGYATAPALMYVGLLMLSNVS), 386-406 (FIVLTANIVTGIMLGFAALVI), and 418-438 (NVGTVIIAIVLVAFYAGGWAI). Residue 315-322 (GTAAGGKT) participates in ATP binding.

It belongs to the nucleobase:cation symporter-2 (NCS2) (TC 2.A.40) family. Azg-like subfamily.

The protein localises to the cell membrane. In Haemophilus influenzae (strain ATCC 51907 / DSM 11121 / KW20 / Rd), this protein is Putative permease HI_0125.